A 204-amino-acid polypeptide reads, in one-letter code: Phosphopantothenoylcysteine decarboxylase (204 aa).

FMN contacts are provided by residues F59 and 104-107 (DANT). N140 contributes to the substrate binding site. C173 functions as the Proton donor in the catalytic mechanism.

The protein belongs to the HFCD (homooligomeric flavin containing Cys decarboxylase) superfamily. In terms of assembly, homotrimer. The cofactor is FMN.

The enzyme catalyses N-[(R)-4-phosphopantothenoyl]-L-cysteine + H(+) = (R)-4'-phosphopantetheine + CO2. The protein operates within cofactor biosynthesis; coenzyme A biosynthesis; CoA from (R)-pantothenate: step 3/5. Its function is as follows. Catalyzes the decarboxylation of the cysteine moiety of 4-phosphopantothenoylcysteine to form 4'-phosphopantotheine and this reaction forms part of the biosynthesis of coenzyme A. The sequence is that of Phosphopantothenoylcysteine decarboxylase (PPCDC) from Homo sapiens (Human).